Here is a 317-residue protein sequence, read N- to C-terminus: Methionyl-tRNA formyltransferase (317 aa).

112–115 (SLLP) contributes to the (6S)-5,6,7,8-tetrahydrofolate binding site.

This sequence belongs to the Fmt family.

The catalysed reaction is L-methionyl-tRNA(fMet) + (6R)-10-formyltetrahydrofolate = N-formyl-L-methionyl-tRNA(fMet) + (6S)-5,6,7,8-tetrahydrofolate + H(+). In terms of biological role, attaches a formyl group to the free amino group of methionyl-tRNA(fMet). The formyl group appears to play a dual role in the initiator identity of N-formylmethionyl-tRNA by promoting its recognition by IF2 and preventing the misappropriation of this tRNA by the elongation apparatus. The sequence is that of Methionyl-tRNA formyltransferase from Histophilus somni (strain 2336) (Haemophilus somnus).